Here is a 477-residue protein sequence, read N- to C-terminus: Tripartite motif-containing protein 72 (477 aa).

Zn(2+) is bound by residues C14, C17, C29, H31, C34, C37, C53, C56, C86, H89, C97, D100, C105, C108, H114, and H117. An RING-type zinc finger spans residues 14-57 (CPLCLQLFDAPVTAECGHSFCRACLIRVAGEPADDGTVACPCCQ). A B box-type zinc finger spans residues 81-122 (VPQGHCEEHLDPLSIYCEQDRTLVCGVCASLGSHRGHRLLPA). A coiled-coil region spans residues 135–232 (QQKAQLQEAC…EKVLEEVADK (98 aa)). The residue at position 144 (C144) is an S-nitrosocysteine. S255 carries the phosphoserine modification. Residues 271–475 (DFKFQVWKKM…PLLLVGPDSE (205 aa)) form the B30.2/SPRY domain.

It belongs to the TRIM/RBCC family. In terms of assembly, homodimer. Homooligomer; disulfide-linked. Oligomerizes on the phospholipid membrane. Interacts with DYSF and CAV3. Post-translationally, disulfide bond formation at Cys-242 occurs in case of membrane damage that cause the entry of the oxidized milieu of the extracellular space, resulting in homooligomerization. In terms of processing, S-nitrosylation at Cys-144 stabilizes TRIM72 and protects against oxidation-induced protein degradation and cell death.

It localises to the cell membrane. The protein localises to the sarcolemma. It is found in the cytoplasmic vesicle membrane. The catalysed reaction is S-ubiquitinyl-[E2 ubiquitin-conjugating enzyme]-L-cysteine + [acceptor protein]-L-lysine = [E2 ubiquitin-conjugating enzyme]-L-cysteine + N(6)-ubiquitinyl-[acceptor protein]-L-lysine.. It participates in protein modification; protein ubiquitination. Specifically binds phosphatidylserine. The binding to phospholipids enhances ubiquitination activity. Its function is as follows. Muscle-specific E3 ubiquitin-protein ligase that plays a central role in cell membrane repair by nucleating the assembly of the repair machinery at injury sites. Its ubiquitination activity is mediated by E2 ubiquitin-conjugating enzymes UBE2D1, UBE2D2 and UBE2D3. Acts as a sensor of oxidation: upon membrane damage, entry of extracellular oxidative environment results in disulfide bond formation and homooligomerization at the injury site. This oligomerization acts as a nucleation site for recruitment of TRIM72-containing vesicles to the injury site, leading to membrane patch formation. Probably acts upstream of the Ca(2+)-dependent membrane resealing process. Required for transport of DYSF to sites of cell injury during repair patch formation. Regulates membrane budding and exocytosis. May be involved in the regulation of the mobility of KCNB1-containing endocytic vesicles. In Rattus norvegicus (Rat), this protein is Tripartite motif-containing protein 72.